The primary structure comprises 1321 residues: Adhesion G protein-coupled receptor A3 (1321 aa).

The N-terminal stretch at 1–33 (MEPPGRRRGRAQPPLLLPLSLLALLALLGGGGG) is a signal peptide. Residues 34-761 (GGAAALPAGC…YTQAASLLHP (728 aa)) are Extracellular-facing. Residues N81 and N98 are each glycosylated (N-linked (GlcNAc...) asparagine). LRR repeat units follow at residues 82-103 (RTVTLILSNNKISELKNGSFSG), 106-127 (LLERLDLRNNLISSIDPGAFWG), 130-151 (SLKRLDLTNNRIGCLNADIFRG), and 154-175 (NLVRLNLSGNLFSSLSQGTFDY). N-linked (GlcNAc...) asparagine glycosylation is found at N159, N206, N301, N332, N433, N453, and N592. The region spanning 187-237 (EYLLCDCNILWMHRWVKEKNITVRDTRCVYPKSLQAQPVTGVKQELLTCDP) is the LRRCT domain. An Ig-like domain is found at 242–340 (PSFYMTPSHR…GNNTRTVDIV (99 aa)). An intrachain disulfide couples C264 to C324. The GAIN-B domain occupies 583–750 (LDKQLSFKCN…AVLMDLTGSE (168 aa)). Residues 594-620 (SNTFSSLALKNTIVEASIQLPPSLFSP) form an LRR 5 repeat. N652, N687, and N728 each carry an N-linked (GlcNAc...) asparagine glycan. The GPS stretch occupies residues 701 to 750 (AARWDFDLLNGQGGWKSDGCHILYSDENITTIQCYSLSNYAVLMDLTGSE). The cysteines at positions 720 and 734 are disulfide-linked. The chain crosses the membrane as a helical span at residues 762 to 782 (VVYTTAIILLLCLLAVIVSYI). The Cytoplasmic segment spans residues 783 to 796 (YHHSLIRISLKSWH). A helical membrane pass occupies residues 797-817 (MLVNLCFHIFLTCVVFVGGIT). The Extracellular segment spans residues 818–826 (QTRNASICQ). A glycan (N-linked (GlcNAc...) asparagine) is linked at N821. A helical transmembrane segment spans residues 827-847 (AVGIILHYSTLATVLWVGVTA). The Cytoplasmic segment spans residues 848–876 (RNIYKQVTKKAKRCQDPDEPPPPPRPMLR). A helical membrane pass occupies residues 877–897 (FYLIGGGIPIIVCGITAAANI). Topologically, residues 898 to 919 (KNYGSRPNAPYCWMAWEPSLGA) are extracellular. Residues 920 to 940 (FYGPASFITFVNCMYFLSIFI) traverse the membrane as a helical segment. Residues 941–996 (QLKRHPERKYELKEPTEEQQRLAANENGEINHQDSMSLSLISTSALENEHTFHSQL) lie on the Cytoplasmic side of the membrane. The chain crosses the membrane as a helical span at residues 997–1017 (LGASLTLLLYVALWMFGALAV). Residues 1018 to 1024 (SLYYPLD) are Extracellular-facing. The chain crosses the membrane as a helical span at residues 1025–1045 (LVFSFVFGATSLSFSAFFVVH). At 1046 to 1321 (HCVNREDVRL…TGLWKHETTV (276 aa)) the chain is on the cytoplasmic side. Polar residues predominate over residues 1073–1083 (NVQPPNSNGTN). Disordered stretches follow at residues 1073-1094 (NVQPPNSNGTNGEAPKCPNSSA), 1198-1219 (VEGSVQNGLPKSRLGNNEGHSR), 1231-1265 (QYNPPQQDSSDACSTLPKSSRNFEKPVSTTSKKDA), and 1294-1321 (SNGQEGPLLGTDSTGNVRTGLWKHETTV). A compositionally biased stretch (polar residues) spans 1233–1250 (NPPQQDSSDACSTLPKSS). Residues 1319 to 1321 (TTV) carry the PDZ-binding motif.

It belongs to the G-protein coupled receptor 2 family. Adhesion G-protein coupled receptor (ADGR) subfamily. Interacts (via PDZ-binding motif) with DLG1.

The protein localises to the membrane. Orphan receptor that may have a role in planar cell polarity pathway. The protein is Adhesion G protein-coupled receptor A3 of Homo sapiens (Human).